A 428-amino-acid chain; its full sequence is MGNNIKVTFDPNKLAAWWPTVGTYYTPTTTVTNPAIFKPGIYQTTSLKNPKNQQELDAILMTRYKEIDWDNWQGFPVNQRLPVSNNNPPSGQRAETFEIKSRPIIVPGIRDIPRGIVPPQTPSNRDQRRKPTPLTPPLRDTHPHLTMKNQTGHLQGFAEGLRALTTSDHHNSAYGDPFTTLSPVVPTVSTTLSPPLTIGDPVLSTEMSPSGLLGLLAGLQVVYFLWTKILTIAQSLDWWWTSLSFPGGIPECTGQNLQFQTCKHLPTSCPPTCNGFRWMYLRRFIIYLLVLLLFLTFLLVLLDWKGLLPVCPMMPATETTVNCRQCTISAQDTFTTPYCCCLKPTAGNCTCWPIPSSWALGSYLWEWALARFSWLSLLVPLLQWLGGISLTVWLLLIWMIWFWGPVLMSILPPFIPIFALFFLIWAYI.

G2 carries the N-myristoyl glycine; by host lipid modification. Positions 2–145 are pre-S1; it reads GNNIKVTFDP…PPLRDTHPHL (144 aa). A pre-S region spans residues 2-204; sequence GNNIKVTFDP…PLTIGDPVLS (203 aa). Residues 2–211 are Virion surface; in external conformation-facing; the sequence is GNNIKVTFDP…VLSTEMSPSG (210 aa). Topologically, residues 2 to 283 are intravirion; in internal conformation; it reads GNNIKVTFDP…NGFRWMYLRR (282 aa). Residue N3 is glycosylated (N-linked (GlcNAc...) asparagine). The disordered stretch occupies residues 110 to 144; the sequence is RDIPRGIVPPQTPSNRDQRRKPTPLTPPLRDTHPH. A pre-S2 region spans residues 146–204; the sequence is TMKNQTGHLQGFAEGLRALTTSDHHNSAYGDPFTTLSPVVPTVSTTLSPPLTIGDPVLS. Residues 212 to 232 form a helical membrane-spanning segment; that stretch reads LLGLLAGLQVVYFLWTKILTI. At 233-283 the chain is on the intravirion; in external conformation side; that stretch reads AQSLDWWWTSLSFPGGIPECTGQNLQFQTCKHLPTSCPPTCNGFRWMYLRR. A helical transmembrane segment spans residues 284-304; sequence FIIYLLVLLLFLTFLLVLLDW. At 305 to 376 the chain is on the virion surface side; it reads KGLLPVCPMM…WALARFSWLS (72 aa). The N-linked (GlcNAc...) asparagine; by host glycan is linked to N348. The chain crosses the membrane as a helical span at residues 377 to 397; the sequence is LLVPLLQWLGGISLTVWLLLI. The Intravirion segment spans residues 398 to 403; it reads WMIWFW. The chain crosses the membrane as a helical span at residues 404-426; that stretch reads GPVLMSILPPFIPIFALFFLIWA. Residues 427–428 are Virion surface-facing; sequence YI.

This sequence belongs to the orthohepadnavirus major surface antigen family. In terms of assembly, in its internal form (Li-HBsAg), interacts with the capsid protein and with the isoform S. Interacts with host chaperone CANX. Associates with host chaperone CANX through its pre-S2 N glycan; this association may be essential for isoform M proper secretion. As to quaternary structure, interacts with isoform L. Interacts with the antigens of satellite virus HDV (HDVAgs); this interaction is required for encapsidation of HDV genomic RNA. Isoform M is N-terminally acetylated by host at a ratio of 90%, and N-glycosylated by host at the pre-S2 region. Post-translationally, myristoylated.

It is found in the virion membrane. The large envelope protein exists in two topological conformations, one which is termed 'external' or Le-HBsAg and the other 'internal' or Li-HBsAg. In its external conformation the protein attaches the virus to cell receptors and thereby initiating infection. This interaction determines the species specificity and liver tropism. This attachment induces virion internalization predominantly through caveolin-mediated endocytosis. The large envelope protein also assures fusion between virion membrane and endosomal membrane. In its internal conformation the protein plays a role in virion morphogenesis and mediates the contact with the nucleocapsid like a matrix protein. Functionally, the middle envelope protein plays an important role in the budding of the virion. It is involved in the induction of budding in a nucleocapsid independent way. In this process the majority of envelope proteins bud to form subviral lipoprotein particles of 22 nm of diameter that do not contain a nucleocapsid. This is Large envelope protein from Ground squirrel hepatitis virus (strain 27) (GSHV).